Reading from the N-terminus, the 793-residue chain is Xaa-Pro dipeptidyl-peptidase (793 aa).

Catalysis depends on charge relay system residues serine 363, aspartate 483, and histidine 514.

The protein belongs to the peptidase S15 family. In terms of assembly, homodimer.

The protein localises to the cytoplasm. The catalysed reaction is Hydrolyzes Xaa-Pro-|- bonds to release unblocked, N-terminal dipeptides from substrates including Ala-Pro-|-p-nitroanilide and (sequentially) Tyr-Pro-|-Phe-Pro-|-Gly-Pro-|-Ile.. In terms of biological role, removes N-terminal dipeptides sequentially from polypeptides having unsubstituted N-termini provided that the penultimate residue is proline. This chain is Xaa-Pro dipeptidyl-peptidase, found in Lactobacillus helveticus (strain DPC 4571).